Reading from the N-terminus, the 214-residue chain is Osteoclast-stimulating factor 1 (214 aa).

An SH3 domain is found at 12–71 (GQVKVFRALFTFDPRTPDELYFEEGDILYISDTSDTNWWKGTCRGRTGLIPSNYVAEQAE). 3 ANK repeats span residues 72–101 (TIDH…GING), 105–135 (AGNT…ELNQ), and 139–168 (LGDT…RTDI).

In terms of tissue distribution, ubiquitously expressed.

The protein localises to the cytoplasm. Functionally, induces bone resorption, acting probably through a signaling cascade which results in the secretion of factor(s) enhancing osteoclast formation and activity. The chain is Osteoclast-stimulating factor 1 (ostf1) from Monopterus albus (Swamp eel).